A 293-amino-acid chain; its full sequence is NAD kinase (293 aa).

The active-site Proton acceptor is aspartate 73. Residues aspartate 73–glycine 74, histidine 78, asparagine 147–aspartate 148, arginine 158, arginine 175, aspartate 177, threonine 188–serine 193, and glutamine 248 each bind NAD(+).

It belongs to the NAD kinase family. The cofactor is a divalent metal cation.

Its subcellular location is the cytoplasm. The enzyme catalyses NAD(+) + ATP = ADP + NADP(+) + H(+). Its function is as follows. Involved in the regulation of the intracellular balance of NAD and NADP, and is a key enzyme in the biosynthesis of NADP. Catalyzes specifically the phosphorylation on 2'-hydroxyl of the adenosine moiety of NAD to yield NADP. The protein is NAD kinase of Nitrosococcus oceani (strain ATCC 19707 / BCRC 17464 / JCM 30415 / NCIMB 11848 / C-107).